A 436-amino-acid polypeptide reads, in one-letter code: ATP-dependent protease ATPase subunit HslU (436 aa).

ATP contacts are provided by residues Ile19, 61–65 (GVGKT), Asp249, Glu314, and Arg386.

The protein belongs to the ClpX chaperone family. HslU subfamily. In terms of assembly, a double ring-shaped homohexamer of HslV is capped on each side by a ring-shaped HslU homohexamer. The assembly of the HslU/HslV complex is dependent on binding of ATP.

It localises to the cytoplasm. In terms of biological role, ATPase subunit of a proteasome-like degradation complex; this subunit has chaperone activity. The binding of ATP and its subsequent hydrolysis by HslU are essential for unfolding of protein substrates subsequently hydrolyzed by HslV. HslU recognizes the N-terminal part of its protein substrates and unfolds these before they are guided to HslV for hydrolysis. This chain is ATP-dependent protease ATPase subunit HslU, found in Bartonella henselae (strain ATCC 49882 / DSM 28221 / CCUG 30454 / Houston 1) (Rochalimaea henselae).